The following is a 150-amino-acid chain: MSDNNQALKDAGLKVTLPRLKILEVLQQPECQHISAEELYKKLIDLSEEIGLATVYRVLNQFDDAGIVTRHHFEGGKSVFELSTQHHHDHLVCLDCGEVIEFSDDVIEQRQKEIAAKYNVQLTNHSLYLYGKCGSDGSCKDNPNAHKPKK.

Residues 1–84 form a DNA-binding region; the sequence is MSDNNQALKD…GGKSVFELST (84 aa). Zn(2+) contacts are provided by His33 and Glu81. Residues 85–143 form a dimerization region; that stretch reads QHHHDHLVCLDCGEVIEFSDDVIEQRQKEIAAKYNVQLTNHSLYLYGKCGSDGSCKDNP. Fe cation contacts are provided by His87 and Asp89. Positions 90, 93, 96, and 101 each coordinate Zn(2+). 2 residues coordinate Fe cation: Glu108 and His125.

Belongs to the Fur family. As to quaternary structure, homodimer.

It localises to the cytoplasm. Functionally, fur acts as a repressor, employing Fe(2+) as a cofactor to bind the operator of the iron transport operon. This chain is Ferric uptake regulation protein (fur), found in Vibrio cholerae serotype O1 (strain ATCC 39541 / Classical Ogawa 395 / O395).